A 417-amino-acid chain; its full sequence is Tyrosine--tRNA ligase (417 aa).

Residue Tyr-39 coordinates L-tyrosine. Positions 44 to 53 match the 'HIGH' region motif; sequence PTAPSLHAGG. Residues Tyr-176 and Gln-180 each coordinate L-tyrosine. A 'KMSKS' region motif is present at residues 236-240; sequence KMGKS. Residue Lys-239 coordinates ATP. The S4 RNA-binding domain occupies 350–417; sequence IGVLALMVLA…KKRHVLIRPA (68 aa).

This sequence belongs to the class-I aminoacyl-tRNA synthetase family. TyrS type 1 subfamily. As to quaternary structure, homodimer.

The protein resides in the cytoplasm. The enzyme catalyses tRNA(Tyr) + L-tyrosine + ATP = L-tyrosyl-tRNA(Tyr) + AMP + diphosphate + H(+). Functionally, catalyzes the attachment of tyrosine to tRNA(Tyr) in a two-step reaction: tyrosine is first activated by ATP to form Tyr-AMP and then transferred to the acceptor end of tRNA(Tyr). The protein is Tyrosine--tRNA ligase of Brucella suis biovar 1 (strain 1330).